The chain runs to 383 residues: L-lactate dehydrogenase (383 aa).

An FMN hydroxy acid dehydrogenase domain is found at 1–380 (MIISSGNDYR…NADCLVQAIK (380 aa)). Tyrosine 24 lines the substrate pocket. Serine 106 and glutamine 127 together coordinate FMN. Tyrosine 129 serves as a coordination point for substrate. Threonine 155 lines the FMN pocket. Arginine 164 contacts substrate. An FMN-binding site is contributed by lysine 251. The Proton acceptor role is filled by histidine 275. Residue arginine 278 coordinates substrate. 306–330 (DSGIRNGLDVVRMLALGADTVLLGR) lines the FMN pocket.

The protein belongs to the FMN-dependent alpha-hydroxy acid dehydrogenase family. FMN is required as a cofactor.

Its subcellular location is the cell inner membrane. The enzyme catalyses (S)-lactate + A = pyruvate + AH2. In terms of biological role, catalyzes the conversion of L-lactate to pyruvate. Is coupled to the respiratory chain. In Acinetobacter baumannii (strain AB307-0294), this protein is L-lactate dehydrogenase.